We begin with the raw amino-acid sequence, 208 residues long: Uracil phosphoribosyltransferase (208 aa).

Residues Arg78, Arg103, and 130–138 (DPMLATGGS) each bind 5-phospho-alpha-D-ribose 1-diphosphate. Residues Ile193 and 198-200 (GDA) contribute to the uracil site. A 5-phospho-alpha-D-ribose 1-diphosphate-binding site is contributed by Asp199.

The protein belongs to the UPRTase family. Mg(2+) is required as a cofactor.

It catalyses the reaction UMP + diphosphate = 5-phospho-alpha-D-ribose 1-diphosphate + uracil. It participates in pyrimidine metabolism; UMP biosynthesis via salvage pathway; UMP from uracil: step 1/1. Its activity is regulated as follows. Allosterically activated by GTP. Catalyzes the conversion of uracil and 5-phospho-alpha-D-ribose 1-diphosphate (PRPP) to UMP and diphosphate. The chain is Uracil phosphoribosyltransferase from Shewanella woodyi (strain ATCC 51908 / MS32).